A 130-amino-acid polypeptide reads, in one-letter code: MANLDVSQNTSDIHFSVSAADKVAELIKEEDNSNLNLRVSITGGGCSGFQYGFSFDEQINDDDTIVIQQCSDGKSSVKLLVDSMSYQYLHDAEIDYIKGIQGEQFVIRNPNAKTTCGCGSSFSIGDEDDL.

Iron-sulfur cluster contacts are provided by C46, C116, and C118.

This sequence belongs to the HesB/IscA family. As to quaternary structure, homodimer. It depends on iron-sulfur cluster as a cofactor.

Required for insertion of 4Fe-4S clusters for at least IspG. In Legionella pneumophila subsp. pneumophila (strain Philadelphia 1 / ATCC 33152 / DSM 7513), this protein is Iron-sulfur cluster insertion protein ErpA.